We begin with the raw amino-acid sequence, 504 residues long: L-carnitine/gamma-butyrobetaine antiporter (504 aa).

The next 12 membrane-spanning stretches (helical) occupy residues 10 to 30 (IEPK…WLTV), 51 to 71 (WGWA…WLVF), 92 to 112 (IFMM…SIEI), 143 to 163 (GPLP…FFFV), 195 to 215 (FYLV…TPLV), 231 to 251 (LDAI…ACGL), 263 to 283 (SYLS…SFIM), 316 to 336 (WTVF…IFLA), 347 to 367 (LCFG…TVLG), 398 to 418 (WAAL…CFIA), 446 to 466 (LLVR…LLAL), and 475 to 495 (AIIA…LSFI).

It belongs to the BCCT transporter (TC 2.A.15) family. CaiT subfamily. In terms of assembly, homotrimer.

The protein resides in the cell inner membrane. The enzyme catalyses 4-(trimethylamino)butanoate(in) + (R)-carnitine(out) = 4-(trimethylamino)butanoate(out) + (R)-carnitine(in). It participates in amine and polyamine metabolism; carnitine metabolism. In terms of biological role, catalyzes the exchange of L-carnitine for gamma-butyrobetaine. The sequence is that of L-carnitine/gamma-butyrobetaine antiporter from Escherichia coli (strain K12 / MC4100 / BW2952).